The following is a 64-amino-acid chain: Translation machinery-associated protein 7B (64 aa).

The disordered stretch occupies residues 1-38; it reads MSSHEGGKKKALKQPKKQAKEMDEEEKAFKQKQKEEQK. A compositionally biased stretch (basic and acidic residues) spans 27–38; sequence KAFKQKQKEEQK.

Belongs to the TMA7 family.

This Homo sapiens (Human) protein is Translation machinery-associated protein 7B.